The following is a 164-amino-acid chain: Putative lung carcinoma-associated protein 10 (164 aa).

Positions 1–164 (MSSCPVHDCP…TQKPQTTVGQ (164 aa)) are disordered. The segment covering 23–40 (GSRGALRLRGGAPGSAAG) has biased composition (low complexity). Residues 152–164 (MQKTQKPQTTVGQ) are compositionally biased toward polar residues.

The protein is Putative lung carcinoma-associated protein 10 (LCA10) of Homo sapiens (Human).